The chain runs to 165 residues: Fatty acid-binding protein homolog 3 (165 aa).

The signal sequence occupies residues 1 to 19 (MNLYLTLFSFCFLAIMAEA).

This sequence belongs to the calycin superfamily. Fatty-acid binding protein (FABP) family. In terms of tissue distribution, expressed in presumptive hypodermal cells by the comma stage and in posterior body wall muscle cells by the two-fold stage. From L1 to adult stages, expression continues in body wall muscle cells adjacent to the pseudocoelom, while hypodermal expression is extinguished.

The protein resides in the secreted. Its function is as follows. May play a role in sequestering potentially toxic fatty acids and their peroxidation products, or it may be involved in the maintenance of the impermeable lipid layer of the eggshell. The sequence is that of Fatty acid-binding protein homolog 3 (lbp-3) from Caenorhabditis elegans.